A 161-amino-acid polypeptide reads, in one-letter code: Small ribosomal subunit protein uS9 (161 aa).

It belongs to the universal ribosomal protein uS9 family.

The sequence is that of Small ribosomal subunit protein uS9 from Rickettsia felis (strain ATCC VR-1525 / URRWXCal2) (Rickettsia azadi).